We begin with the raw amino-acid sequence, 355 residues long: Peptide chain release factor 1 (355 aa).

The residue at position 230 (Gln230) is an N5-methylglutamine.

Belongs to the prokaryotic/mitochondrial release factor family. In terms of processing, methylated by PrmC. Methylation increases the termination efficiency of RF1.

It is found in the cytoplasm. Its function is as follows. Peptide chain release factor 1 directs the termination of translation in response to the peptide chain termination codons UAG and UAA. In Geobacter metallireducens (strain ATCC 53774 / DSM 7210 / GS-15), this protein is Peptide chain release factor 1.